The primary structure comprises 272 residues: Regulatory protein RecX (272 aa).

The protein belongs to the RecX family.

It localises to the cytoplasm. In terms of biological role, modulates RecA activity. In Oceanobacillus iheyensis (strain DSM 14371 / CIP 107618 / JCM 11309 / KCTC 3954 / HTE831), this protein is Regulatory protein RecX.